A 474-amino-acid chain; its full sequence is Catalase (474 aa).

Residues His-52 and Asn-124 contribute to the active site. Tyr-334 contacts heme.

The protein belongs to the catalase family. Requires heme as cofactor.

It catalyses the reaction 2 H2O2 = O2 + 2 H2O. Its function is as follows. Decomposes hydrogen peroxide into water and oxygen; serves to protect cells from the toxic effects of hydrogen peroxide. This chain is Catalase (katA), found in Campylobacter jejuni subsp. jejuni serotype O:2 (strain ATCC 700819 / NCTC 11168).